We begin with the raw amino-acid sequence, 167 residues long: Phosphopantetheine adenylyltransferase (167 aa).

Thr10 serves as a coordination point for substrate. ATP is bound by residues 10 to 11 (TF) and His18. Substrate-binding residues include Ala77 and Arg91. ATP-binding positions include 92 to 94 (GLR), Glu102, and 127 to 133 (YSFISSS).

The protein belongs to the bacterial CoaD family. In terms of assembly, homohexamer. Mg(2+) is required as a cofactor.

It is found in the cytoplasm. It carries out the reaction (R)-4'-phosphopantetheine + ATP + H(+) = 3'-dephospho-CoA + diphosphate. It functions in the pathway cofactor biosynthesis; coenzyme A biosynthesis; CoA from (R)-pantothenate: step 4/5. Functionally, reversibly transfers an adenylyl group from ATP to 4'-phosphopantetheine, yielding dephospho-CoA (dPCoA) and pyrophosphate. In Thermomicrobium roseum (strain ATCC 27502 / DSM 5159 / P-2), this protein is Phosphopantetheine adenylyltransferase.